A 1962-amino-acid polypeptide reads, in one-letter code: Sodium channel protein type 10 subunit alpha (1962 aa).

Residues methionine 1–lysine 125 lie on the Cytoplasmic side of the membrane. The tract at residues glutamine 32–aspartate 56 is disordered. Basic residues predominate over residues alanine 33–arginine 42. Residues glutamate 43–leucine 55 show a composition bias toward basic and acidic residues. The stretch at phenylalanine 116–glutamine 414 is one I repeat. Residues valine 126–glutamine 149 form a helical membrane-spanning segment. Residues threonine 150–aspartate 154 lie on the Extracellular side of the membrane. The helical transmembrane segment at arginine 155–alanine 174 threads the bilayer. Topologically, residues arginine 175–aspartate 187 are cytoplasmic. Residues proline 188–threonine 206 form a helical membrane-spanning segment. Residues alanine 207–serine 212 lie on the Extracellular side of the membrane. Residues glycine 213–leucine 232 form a helical; Voltage-sensor membrane-spanning segment. Over lysine 233–aspartate 248 the chain is Cytoplasmic. Residues valine 249 to leucine 272 form a helical membrane-spanning segment. The Extracellular portion of the chain corresponds to lysine 273–serine 350. An intrachain disulfide couples cysteine 276 to cysteine 328. 4 N-linked (GlcNAc...) asparagine glycosylation sites follow: asparagine 284, asparagine 288, asparagine 321, and asparagine 344. An intramembrane region (pore-forming) is located at residues phenylalanine 351–leucine 375. Residues arginine 376–tyrosine 382 lie on the Extracellular side of the membrane. The chain crosses the membrane as a helical span at residues methionine 383–alanine 408. The Cytoplasmic segment spans residues tyrosine 409 to phenylalanine 668. Residues serine 450, serine 453, serine 476, and serine 488 each carry the phosphoserine modification. The span at histidine 452–asparagine 463 shows a compositional bias: polar residues. 2 disordered regions span residues histidine 452 to glutamine 493 and leucine 521 to leucine 586. Residues serine 621 and serine 624 each carry the phosphoserine modification. The stretch at cysteine 656 to glutamine 920 is one II repeat. The chain crosses the membrane as a helical span at residues glycine 669–methionine 693. Residues glutamate 694–alanine 704 lie on the Extracellular side of the membrane. A helical membrane pass occupies residues methionine 705–phenylalanine 728. At aspartate 729–lysine 736 the chain is on the cytoplasmic side. The chain crosses the membrane as a helical span at residues arginine 737–alanine 756. Over arginine 757–serine 762 the chain is Extracellular. A helical; Voltage-sensor membrane pass occupies residues valine 763–leucine 782. The Cytoplasmic portion of the chain corresponds to asparagine 783–asparagine 798. The chain crosses the membrane as a helical span at residues leucine 799 to glycine 819. Residues glutamate 820 to aspartate 843 are Extracellular-facing. Asparagine 828 carries N-linked (GlcNAc...) asparagine glycosylation. Residues phenylalanine 844–tryptophan 864 constitute an intramembrane region (pore-forming). Residues alanine 865–serine 873 lie on the Extracellular side of the membrane. Cysteine 866 and cysteine 875 are oxidised to a cystine. Residues isoleucine 874 to leucine 899 traverse the membrane as a helical segment. The Cytoplasmic segment spans residues asparagine 900–arginine 1154. Residues leucine 1015–serine 1026 are compositionally biased toward acidic residues. The disordered stretch occupies residues leucine 1015 to leucine 1035. An III repeat occupies glutamine 1147–leucine 1456. The helical transmembrane segment at isoleucine 1155–phenylalanine 1178 threads the bilayer. Topologically, residues glutamate 1179 to alanine 1191 are extracellular. Residues leucine 1192–phenylalanine 1217 traverse the membrane as a helical segment. Over lysine 1218 to asparagine 1223 the chain is Cytoplasmic. The helical transmembrane segment at alanine 1224 to leucine 1245 threads the bilayer. The Extracellular segment spans residues glutamine 1246–aspartate 1249. Residues valine 1250–phenylalanine 1271 traverse the membrane as a helical; Voltage-sensor segment. Topologically, residues glutamate 1272 to asparagine 1290 are cytoplasmic. A helical transmembrane segment spans residues valine 1291–isoleucine 1318. 3 N-linked (GlcNAc...) asparagine glycosylation sites follow: asparagine 1319, asparagine 1335, and asparagine 1343. The Extracellular segment spans residues asparagine 1319–valine 1360. Residues alanine 1361–alanine 1382 constitute an intramembrane region (pore-forming). Over alanine 1383 to asparagine 1398 the chain is Extracellular. A helical transmembrane segment spans residues valine 1399–isoleucine 1425. Topologically, residues aspartate 1426 to aspartate 1478 are cytoplasmic. The residue at position 1458 (serine 1458) is a Phosphoserine; by PKC. An IV repeat occupies isoleucine 1465–glutamine 1764. A helical transmembrane segment spans residues isoleucine 1479–valine 1502. Topologically, residues glutamate 1503–lysine 1513 are extracellular. A helical transmembrane segment spans residues isoleucine 1514–leucine 1537. The Cytoplasmic portion of the chain corresponds to arginine 1538–threonine 1543. The chain crosses the membrane as a helical span at residues asparagine 1544 to leucine 1567. At threonine 1568–phenylalanine 1579 the chain is on the extracellular side. A helical; Voltage-sensor membrane pass occupies residues arginine 1580–arginine 1601. Residues threonine 1602–asparagine 1616 are Cytoplasmic-facing. A helical transmembrane segment spans residues isoleucine 1617–valine 1639. Over serine 1640 to threonine 1653 the chain is Extracellular. The pore-forming intramembrane region spans phenylalanine 1654 to proline 1676. Topologically, residues isoleucine 1677 to valine 1704 are extracellular. Asparagine 1693 carries an N-linked (GlcNAc...) asparagine glycan. A helical transmembrane segment spans residues glycine 1705–leucine 1729. Over glutamate 1730–proline 1962 the chain is Cytoplasmic. Positions glutamate 1858–proline 1887 constitute an IQ domain. The tract at residues lysine 1914–proline 1962 is disordered. Over residues aspartate 1928–glutamine 1947 the composition is skewed to polar residues.

This sequence belongs to the sodium channel (TC 1.A.1.10) family. Nav1.8/SCN10A subfamily. In terms of assembly, the channel consists of an ion conducting pore forming alpha-subunit regulated by one or more associated auxiliary subunits SCN1B, SCN2B and SCN3B; electrophysiological properties may vary depending on the type of the associated beta subunits. Found in a number of complexes with PRX, DYNLT1 and PDZD2. Interacts with proteins such as FSTL1, PRX, DYNLT1, PDZD2, S100A10 and many others. Interacts with NEDD4 and NEDD4L. Post-translationally, ubiquitinated by NEDD4L; which promotes its endocytosis. In terms of processing, phosphorylation at Ser-1458 by PKC in a highly conserved cytoplasmic loop slows inactivation of the sodium channel and reduces peak sodium currents. Lacks the cysteine which covalently binds the conotoxin GVIIJ. This cysteine (position 825) is speculated in other sodium channel subunits alpha to be implied in covalent binding with the sodium channel subunit beta-2 or beta-4. In terms of tissue distribution, expressed in nodose ganglia, but not in cortex, hippocampus, cerebellum, liver, heart and skeletal muscle.

The protein localises to the cell membrane. It carries out the reaction Na(+)(in) = Na(+)(out). Tetrodotoxin-resistant channel that mediates the voltage-dependent sodium ion permeability of excitable membranes. Assuming opened or closed conformations in response to the voltage difference across the membrane, the protein forms a sodium-selective channel through which sodium ions may pass in accordance with their electrochemical gradient. Plays a role in neuropathic pain mechanisms. The polypeptide is Sodium channel protein type 10 subunit alpha (SCN10A) (Canis lupus familiaris (Dog)).